We begin with the raw amino-acid sequence, 202 residues long: Imidazoleglycerol-phosphate dehydratase (202 aa).

The protein belongs to the imidazoleglycerol-phosphate dehydratase family.

The protein localises to the cytoplasm. It carries out the reaction D-erythro-1-(imidazol-4-yl)glycerol 3-phosphate = 3-(imidazol-4-yl)-2-oxopropyl phosphate + H2O. It functions in the pathway amino-acid biosynthesis; L-histidine biosynthesis; L-histidine from 5-phospho-alpha-D-ribose 1-diphosphate: step 6/9. This is Imidazoleglycerol-phosphate dehydratase from Rhizobium leguminosarum bv. trifolii (strain WSM2304).